The chain runs to 109 residues: Large ribosomal subunit protein uL23 (109 aa).

It belongs to the universal ribosomal protein uL23 family. Part of the 50S ribosomal subunit. Contacts protein L29, and trigger factor when it is bound to the ribosome.

Functionally, one of the early assembly proteins it binds 23S rRNA. One of the proteins that surrounds the polypeptide exit tunnel on the outside of the ribosome. Forms the main docking site for trigger factor binding to the ribosome. In Haemophilus influenzae (strain PittEE), this protein is Large ribosomal subunit protein uL23.